We begin with the raw amino-acid sequence, 981 residues long: Mineralocorticoid receptor (981 aa).

The segment at 1-603 is modulating; sequence METKGYHSLP…STGSSRPSKI (603 aa). The segment covering 234–258 has biased composition (polar residues); the sequence is SLTCSPSVENRGSRSHSPTHASNVG. Disordered regions lie at residues 234-331 and 355-376; these read SLTC…ASTV and AIQD…VPFP. Phosphoserine occurs at positions 250, 259, 283, 287, and 299. 2 stretches are compositionally biased toward low complexity: residues 259-300 and 309-327; these read SPLS…VSSP and SVSS…SSPT. 8 residues coordinate Zn(2+): Cys604, Cys607, Cys621, Cys624, Cys640, Cys646, Cys656, and Cys659. 2 NR C4-type zinc fingers span residues 604-624 and 640-664; these read CLVC…CGSC and CAGR…LQKC. A DNA-binding region (nuclear receptor) is located at residues 604–669; it reads CLVCGDEASG…RLQKCLQAGM (66 aa). A hinge region spans residues 670–722; that stretch reads NLGARKSKKLGKLKGLHEEQPQQPPPPPPQSPEEGTTYIAPTKEPSVNSALVP. The segment at 684–710 is disordered; it reads GLHEEQPQQPPPPPPQSPEEGTTYIAP. Residues 691–700 show a composition bias toward pro residues; the sequence is QQPPPPPPQS. One can recognise an NR LBD domain in the interval 723–961; that stretch reads QLTSITHALT…EFPAMLVEII (239 aa). 21-hydroxyprogesterone is bound by residues Asn767 and Gln773. Aldosterone contacts are provided by Asn767 and Gln773. Asn767 and Gln773 together coordinate progesterone. The segment at 779-782 is important for coactivator binding; sequence KWAK. 21-hydroxyprogesterone is bound by residues Arg814 and Thr942. Aldosterone is bound by residues Arg814 and Thr942. The progesterone site is built by Arg814 and Thr942.

The protein belongs to the nuclear hormone receptor family. NR3 subfamily. Heteromultimeric cytoplasmic complex with HSP90, HSP70, and FKBP4, in the absence of ligand. After ligand binding, it translocates to the nucleus and binds to DNA as a homodimer and as a heterodimer with NR3C1. Binds the coactivator NCOA2. May interact with HSD11B2 in the absence of ligand. Binds the coactivators NCOA1, TIF1 and NRIP1. In terms of processing, phosphorylated. In terms of tissue distribution, detected in liver, brain, heart, kidney, colon, aorta, hippocampus, hypothalamus and adrenal fasciculata.

The protein localises to the cytoplasm. The protein resides in the nucleus. It is found in the endoplasmic reticulum membrane. In terms of biological role, receptor for both mineralocorticoids (MC) such as aldosterone and glucocorticoids (GC) such as corticosterone or cortisol. Binds to mineralocorticoid response elements (MRE) and transactivates target genes. The effect of MC is to increase ion and water transport and thus raise extracellular fluid volume and blood pressure and lower potassium levels. This is Mineralocorticoid receptor (Nr3c2) from Rattus norvegicus (Rat).